Reading from the N-terminus, the 195-residue chain is Probable GTP-binding protein EngB (195 aa).

The 174-residue stretch at 22–195 (GLPEIALAGR…WGAIKKMINR (174 aa)) folds into the EngB-type G domain. GTP-binding positions include 30–37 (GRSNVGKS), 57–61 (GKTQT), 75–78 (DVPG), 142–145 (TKAD), and 174–176 (FSS). 2 residues coordinate Mg(2+): Ser37 and Thr59.

This sequence belongs to the TRAFAC class TrmE-Era-EngA-EngB-Septin-like GTPase superfamily. EngB GTPase family. Requires Mg(2+) as cofactor.

Necessary for normal cell division and for the maintenance of normal septation. In terms of biological role, binds GTP and GDP. The chain is Probable GTP-binding protein EngB from Bacillus subtilis (strain 168).